The chain runs to 311 residues: MIDLLIIAGPTAVGKTDISIELAEKLNGEIISADSMQIYKYMDIGSAKITKDEMKGIPHHLIDVVKPHEEFNVSSFKVLAEKSIKDIWNRGKLPIIAGGTGLYINSLIYNYDFTDADRDEKYREYLTKLAEDKGKEYVHSLLKDIDEKSYEKLYPNDLKRVVRALEVYKITGKSISEYTKENEKKLYDIPYNVNYFVLNMNREVLYERINKRVDIMMGKGLIEEVKKLESMGYTPDMQSMKGIGYKEVLFYLNGDISLDEAIYLIKKGSRNYAKRQLTWFRKDKRSIWIDKDKYSSEEEIVDEIIKMVKDK.

9–16 contacts ATP; the sequence is GPTAVGKT. Substrate is bound at residue 11–16; that stretch reads TAVGKT. The interaction with substrate tRNA stretch occupies residues 34–37; sequence DSMQ.

The protein belongs to the IPP transferase family. Monomer. It depends on Mg(2+) as a cofactor.

The catalysed reaction is adenosine(37) in tRNA + dimethylallyl diphosphate = N(6)-dimethylallyladenosine(37) in tRNA + diphosphate. Catalyzes the transfer of a dimethylallyl group onto the adenine at position 37 in tRNAs that read codons beginning with uridine, leading to the formation of N6-(dimethylallyl)adenosine (i(6)A). The polypeptide is tRNA dimethylallyltransferase (Clostridium botulinum (strain Loch Maree / Type A3)).